The following is a 953-amino-acid chain: MSSRRLGSSRARGRDLAHEVKHFGGLTKHLKKIIFDSNNCLTELKTSDHFEEEVISTLVLPPVADEIVGKVTKNPPALVIFGQTYTSKATLVNKIFREDLFQIVDDSDNNKTWRAVHLKYGSQRNTRLTLTNSFELLNEEPGSPVMRNSWTGIPRVEMLVKEEHQKDACMLSATTEATLNHPLLQCKLQILVTPHNCPGISISQAYNVCTHNVLPVLLYCFDKDQLSEENLRDLQELQNCAGTLPILFVDCREPSEPLVAHRERRLVEDAHEDFDDDSAYDTDERIEGERERHNGLDARLRRRCRPTPNDRPSVIDQLSRAGFISSPEENGRMRGVLDVFTIVNQVEDLHNSAAIVQFIRRSLQYYLIRCCTAMHDLHQHCMNLFITTAFDMQRDILVTPKRIEYARQRENELFDSLKDLTNQKQEQLRSLIQSTVADMTEDLLEQAGNYRFTDLEVSQEGKIQSQKDIKRCTEQIQDLVLARLNACVVEKLIGSVELLRESFLGTLQRCLASLEKIDGDLETSTTVALRQILNAAYQVEVSVRTSSSVVRIIWERMKEFFQSIKPFKTPTRVDTEWKRKVAQTMINNLDESKLAKSICSQFRSRLNNSHESFSTSLRQLEQKHSGRLEKTEEQRMKVRKVYAPRLARLALESTSLRDMVLYGMPKLEREIGRGQYGVVYSCRSWGGVTHCAVKSVVPPDDKHWNDLAMEFHYTRSIAEHDRIVAVIGSVIDHGYGGMGCSPAVLLLMERMQRDLHTAIKANMELPERLHVALDVAEGVRYLHSLGLVHRDIKLKNVLLDKHDRGKITDLGFCKPEAMMSGSIVGTPIHMAPELFSGKYDNSVDTYAFGILLWYVCAGHVKLPQAFEQCANKDHLWTSVKKGVRPERLRPQFDDASWNLMKSSWAGEPSERPLLGEVQSKLQDIYTKALAKREAEGGGGGGAKEQQNLKSDTL.

One can recognise a Protein kinase domain in the interval 665 to 926; that stretch reads PKLEREIGRG…VQSKLQDIYT (262 aa). ATP contacts are provided by residues 671-679 and Lys-694; that span reads IGRGQYGVV. Catalysis depends on Asp-791, which acts as the Proton acceptor. Positions 932–953 are disordered; that stretch reads REAEGGGGGGAKEQQNLKSDTL.

It belongs to the protein kinase superfamily. Ser/Thr protein kinase family.

Its subcellular location is the cytoplasm. It localises to the cell membrane. The protein resides in the apical cell membrane. The protein localises to the basolateral cell membrane. It is found in the cell junction. It catalyses the reaction L-seryl-[protein] + ATP = O-phospho-L-seryl-[protein] + ADP + H(+). The catalysed reaction is L-threonyl-[protein] + ATP = O-phospho-L-threonyl-[protein] + ADP + H(+). It carries out the reaction L-tyrosyl-[protein] + ATP = O-phospho-L-tyrosyl-[protein] + ADP + H(+). May act as a positive regulator of ERK phosphorylation downstream of fibroblast growth factor-receptor activation. May induce both caspase-dependent apoptosis and caspase-independent cell death. May play a role in the embryonic development. This is Dual serine/threonine and tyrosine protein kinase from Strongylocentrotus purpuratus (Purple sea urchin).